The sequence spans 322 residues: Corticotropin-releasing factor-binding protein (322 aa).

The N-terminal stretch at 1 to 24 (MSPNFKLQCHFILILLTALRGESR) is a signal peptide. Intrachain disulfides connect cysteine 60/cysteine 81, cysteine 104/cysteine 141, cysteine 183/cysteine 205, cysteine 237/cysteine 264, and cysteine 277/cysteine 318. Asparagine 204 carries an N-linked (GlcNAc...) asparagine glycan.

The protein belongs to the CRF-binding protein family.

The protein resides in the secreted. Functionally, binds CRF and inactivates it. May prevent inappropriate pituitary-adrenal stimulation in pregnancy. The chain is Corticotropin-releasing factor-binding protein (Crhbp) from Mus musculus (Mouse).